Consider the following 238-residue polypeptide: Phosphoribosylaminoimidazole-succinocarboxamide synthase (238 aa).

The protein belongs to the SAICAR synthetase family.

The catalysed reaction is 5-amino-1-(5-phospho-D-ribosyl)imidazole-4-carboxylate + L-aspartate + ATP = (2S)-2-[5-amino-1-(5-phospho-beta-D-ribosyl)imidazole-4-carboxamido]succinate + ADP + phosphate + 2 H(+). Its pathway is purine metabolism; IMP biosynthesis via de novo pathway; 5-amino-1-(5-phospho-D-ribosyl)imidazole-4-carboxamide from 5-amino-1-(5-phospho-D-ribosyl)imidazole-4-carboxylate: step 1/2. This Marinomonas sp. (strain MWYL1) protein is Phosphoribosylaminoimidazole-succinocarboxamide synthase.